Here is a 551-residue protein sequence, read N- to C-terminus: MIIKVKGQTYFTSKYPNIIIPEKPVPQLILKHIRSKPDQVLLVDGLTFKEYSSHFVADTIEKVACGLNKLNIKKGDVLGVILPNLPEYVPIFHGTLLMGGITSLVNPDYTIEELSHTLATVSPRYLAVTLAVYEKIKNDLKRVFPSVEKVILVDIAGQTLKEIDQLTLSSDGIVMSFNQLINNNGKDYPIVRIDPKKDTAIIPFSSGTTGLFKGVCLSHHNIVSNTYQTQTIETSTYKKNDTVMGILPFFHIYGLMLFLMLMVKQGHRVVVLPKFEPVRFLELIQKYKVAISFIVPPVAIMFAKSPIVDKFDLSSLRTLFSGAAPLSSEVEDLIKERFKGRLVIKQGYGATELSPACFVIPSGLVKSGSAGILLPNQLAKIISPETGENLGMGEKGEICIKGPNVMLGYYNNEKATNEVIDKDGFLKTGDIGYVDEDGYYFIVDRSKELIKCKGFQVPPAELEALLLSHPKVADACVVGLSKGDMGEVPRGFVVIKQNESLTEKELLDWAHPKIANYKHFRGGIFFIPAIPKSATGKLLRKNLKDFNPPKL.

ATP is bound by residues Ser205, Ser206, Gly207, Thr208, Thr209, and Lys213. Tyr253 serves as a coordination point for (E)-4-coumaroyl-AMP. Lys274 serves as a coordination point for CoA. Positions 276–346 (EPVRFLELIQ…RFKGRLVIKQ (71 aa)) are SBD1. (E)-4-coumaroyl-AMP-binding residues include Ala323, Gln346, Gly347, and Thr351. The ATP site is built by Gln346, Gly347, Thr351, Asp430, and Arg445. The SBD2 stretch occupies residues 347–409 (GYGATELSPA…IKGPNVMLGY (63 aa)). The (E)-4-coumaroyl-AMP site is built by Lys447 and Lys451. Residues Lys453 and Gly454 each coordinate CoA. Residue Lys537 coordinates ATP.

The protein belongs to the ATP-dependent AMP-binding enzyme family. The cofactor is Mg(2+).

The catalysed reaction is (E)-4-coumarate + ATP + CoA = (E)-4-coumaroyl-CoA + AMP + diphosphate. It carries out the reaction (E)-4-coumarate + ATP + H(+) = (E)-4-coumaroyl-AMP + diphosphate. It catalyses the reaction (E)-4-coumaroyl-AMP + CoA = (E)-4-coumaroyl-CoA + AMP + H(+). It participates in phytoalexin biosynthesis; 3,4',5-trihydroxystilbene biosynthesis; 3,4',5-trihydroxystilbene from trans-4-coumarate: step 1/2. In terms of biological role, carboxylate--CoA ligase that may use 4-coumarate as substrate. Follows a two-step reaction mechanism, wherein the carboxylate substrate first undergoes adenylation by ATP, followed by a thioesterification in the presence of CoA to yield the final CoA thioester. The protein is Probable 4-coumarate--CoA ligase 1 (4cl1) of Dictyostelium discoideum (Social amoeba).